We begin with the raw amino-acid sequence, 591 residues long: Serine/threonine-protein kinase PAK 4 (591 aa).

The CRIB domain occupies 11–24; sequence ISAPSNFEHRVHTG. Residues 25–320 are linker; it reads FDQHEQKFTG…VVDPGDPRSY (296 aa). Ser41 bears the Phosphoserine mark. Lys78 is subject to N6-methyllysine. The disordered stretch occupies residues 95 to 301; sequence TRSNSLRRDS…PQREPQRVSH (207 aa). Phosphoserine is present on residues Ser104 and Ser148. Positions 149 to 164 are enriched in basic and acidic residues; sequence GDRRRAGPEKRPKSSR. A phosphoserine mark is found at Ser167 and Ser181. At Thr187 the chain carries Phosphothreonine. Residues 191-202 show a composition bias toward low complexity; sequence AGLASGAKLAAG. Ser195 carries the phosphoserine modification. The residue at position 207 (Thr207) is a Phosphothreonine. Residues 242–260 show a composition bias toward low complexity; that stretch reads SSSSSSRPPTRARGAPSPG. Phosphoserine occurs at positions 258 and 267. A compositionally biased stretch (pro residues) spans 271–290; that stretch reads LAPPACTPAAPAVPGPPGPR. At Ser291 the chain carries Phosphoserine. Residues 292–301 show a composition bias toward basic and acidic residues; the sequence is PQREPQRVSH. A GEF-interaction domain (GID) region spans residues 298–323; it reads RVSHEQFRAALQLVVDPGDPRSYLDN. The 252-residue stretch at 321–572 folds into the Protein kinase domain; it reads LDNFIKIGEG…AAELLKHPFL (252 aa). ATP-binding positions include 327–335, Lys350, and 396–398; these read IGEGSTGIV and EFL. Asp440 serves as the catalytic Proton acceptor. 458–460 lines the ATP pocket; it reads DFG. Phosphoserine; by autocatalysis is present on Ser474.

The protein belongs to the protein kinase superfamily. STE Ser/Thr protein kinase family. STE20 subfamily. In terms of assembly, interacts with FGFR2 and GRB2. Interacts tightly with GTP-bound but not GDP-bound CDC42/p21 and weakly with RAC1. Interacts with INKA1. Interacts with SH3RF2. Interacts with RHOU and PAXI; the PAK4-RHOU complex protects RHOU from ubiquitination and acts as a scaffold to suppport paxillin/PAXI phosphorylation. Post-translationally, autophosphorylated on serine residues when activated by CDC42/p21. Phosphorylated on tyrosine residues upon stimulation of FGFR2. Methylated by SETD6. In terms of processing, polyubiquitinated, leading to its proteasomal degradation. Highest expression in prostate, testis and colon.

It localises to the cytoplasm. It catalyses the reaction L-seryl-[protein] + ATP = O-phospho-L-seryl-[protein] + ADP + H(+). It carries out the reaction L-threonyl-[protein] + ATP = O-phospho-L-threonyl-[protein] + ADP + H(+). Inhibited by INKA1; which inhibits the serine/threonine-protein kinase activity by binding PAK4 in a substrate-like manner. Functionally, serine/threonine-protein kinase that plays a role in a variety of different signaling pathways including cytoskeleton regulation, cell adhesion turnover, cell migration, growth, proliferation or cell survival. Activation by various effectors including growth factor receptors or active CDC42 and RAC1 results in a conformational change and a subsequent autophosphorylation on several serine and/or threonine residues. Phosphorylates and inactivates the protein phosphatase SSH1, leading to increased inhibitory phosphorylation of the actin binding/depolymerizing factor cofilin. Decreased cofilin activity may lead to stabilization of actin filaments. Phosphorylates LIMK1, a kinase that also inhibits the activity of cofilin. Phosphorylates integrin beta5/ITGB5 and thus regulates cell motility. Phosphorylates ARHGEF2 and activates the downstream target RHOA that plays a role in the regulation of assembly of focal adhesions and actin stress fibers. Stimulates cell survival by phosphorylating the BCL2 antagonist of cell death BAD. Alternatively, inhibits apoptosis by preventing caspase-8 binding to death domain receptors in a kinase independent manner. Plays a role in cell-cycle progression by controlling levels of the cell-cycle regulatory protein CDKN1A and by phosphorylating RAN. Promotes kinase-independent stabilization of RHOU, thereby contributing to focal adhesion disassembly during cell migration. The sequence is that of Serine/threonine-protein kinase PAK 4 from Homo sapiens (Human).